Consider the following 240-residue polypeptide: HTH-type transcriptional regulator Mce2R (240 aa).

The HTH gntR-type domain maps to 9-77; sequence RSVPEEVFEQ…QGDVTTVRDF (69 aa). A DNA-binding region (H-T-H motif) is located at residues 37–56; it reads ERRLAELLGVSRPAVREALK.

In terms of biological role, negatively regulates the expression of its operon as well as expression of end (endonuclease 4). The protein is HTH-type transcriptional regulator Mce2R (mce2R) of Mycobacterium tuberculosis (strain CDC 1551 / Oshkosh).